Here is a 275-residue protein sequence, read N- to C-terminus: 2,3,4,5-tetrahydropyridine-2,6-dicarboxylate N-succinyltransferase (275 aa).

Substrate contacts are provided by Arg104 and Asp141.

This sequence belongs to the transferase hexapeptide repeat family. In terms of assembly, homotrimer.

It localises to the cytoplasm. It carries out the reaction (S)-2,3,4,5-tetrahydrodipicolinate + succinyl-CoA + H2O = (S)-2-succinylamino-6-oxoheptanedioate + CoA. Its pathway is amino-acid biosynthesis; L-lysine biosynthesis via DAP pathway; LL-2,6-diaminopimelate from (S)-tetrahydrodipicolinate (succinylase route): step 1/3. The sequence is that of 2,3,4,5-tetrahydropyridine-2,6-dicarboxylate N-succinyltransferase from Actinobacillus succinogenes (strain ATCC 55618 / DSM 22257 / CCUG 43843 / 130Z).